Reading from the N-terminus, the 156-residue chain is Transcriptional repressor NrdR (156 aa).

A zinc finger spans residues Cys-3–Cys-34. Residues Leu-49 to Val-139 form the ATP-cone domain.

Belongs to the NrdR family. Requires Zn(2+) as cofactor.

Its function is as follows. Negatively regulates transcription of bacterial ribonucleotide reductase nrd genes and operons by binding to NrdR-boxes. The sequence is that of Transcriptional repressor NrdR from Lysinibacillus sphaericus (strain C3-41).